Reading from the N-terminus, the 532-residue chain is MALRLPALLDANAPWGPPSTVPEDLKFDDVPYAPFSKGDKLGKVADWAAETKDGKDQKRTQFGKNFRDPYHAYGASSASFFTNEDAEELSSFSVVDNAKNANKPRGTATVLKTRGGAPRGGSFAGRGGSQRGGRFQNQPGRGPVGGQRGPNPRFGKSKFGWRDFDKPQRIRNASVDITDDWTEIQEITYSEMQKLSYDVAQGVEIDTYGDLFPYDRKFDRTNNITKLAHLGRTVFNTTTSEDPIMQELAKDPANRIFITDTILSQIMCTTKSVAPWDIVITKKGEQLFFDKREGGPLDFITVDENAADPPADSTDKDNINSSANLGFEATLINQNFASNAITEDPKSKVSYKANPFSNNDSNVLCHAYKYKKFNLSDDPEGAPLNLILRTEVDALGPDGTTLNLRVLNEYGSSEWKNKFNTGRGAIIAAELKHNLNKISRWTVQSILGDVDQMKIGFASRVSPKDNTQHNIIGVVSREPKQFAEQINVNLNNGWGIFKSVVNIATAKDDGKYVLVKDPNNPAVKIYKPAAGF.

The disordered stretch occupies residues 108–161; that stretch reads ATVLKTRGGAPRGGSFAGRGGSQRGGRFQNQPGRGPVGGQRGPNPRFGKSKFGW. Residues 117–131 show a composition bias toward gly residues; the sequence is APRGGSFAGRGGSQR. Residues 132–141 show a composition bias toward low complexity; that stretch reads GGRFQNQPGR. The segment at 296–310 is RNA gate; sequence PLDFITVDENAADPP.

The protein belongs to the eIF-3 subunit D family. In terms of assembly, component of the eukaryotic translation initiation factor 3 (eIF-3) complex.

Its subcellular location is the cytoplasm. Functionally, mRNA cap-binding component of the eukaryotic translation initiation factor 3 (eIF-3) complex, which is involved in protein synthesis of a specialized repertoire of mRNAs and, together with other initiation factors, stimulates binding of mRNA and methionyl-tRNAi to the 40S ribosome. The eIF-3 complex specifically targets and initiates translation of a subset of mRNAs involved in cell proliferation. In the eIF-3 complex, eif3d specifically recognizes and binds the 7-methylguanosine cap of a subset of mRNAs. This is Eukaryotic translation initiation factor 3 subunit D from Yarrowia lipolytica (strain CLIB 122 / E 150) (Yeast).